The primary structure comprises 82 residues: MVTIRLSRGGAKKRPFYQIVVADSRSPRDGRFIERIGFFNPIATGNAERLRLDVAKVDAWVAKGASLSDRVAVLVKEARKAA.

The protein belongs to the bacterial ribosomal protein bS16 family.

The chain is Small ribosomal subunit protein bS16 from Glaesserella parasuis serovar 5 (strain SH0165) (Haemophilus parasuis).